The sequence spans 447 residues: Na(+)-translocating NADH-quinone reductase subunit A (447 aa).

It belongs to the NqrA family. Composed of six subunits; NqrA, NqrB, NqrC, NqrD, NqrE and NqrF.

The enzyme catalyses a ubiquinone + n Na(+)(in) + NADH + H(+) = a ubiquinol + n Na(+)(out) + NAD(+). NQR complex catalyzes the reduction of ubiquinone-1 to ubiquinol by two successive reactions, coupled with the transport of Na(+) ions from the cytoplasm to the periplasm. NqrA to NqrE are probably involved in the second step, the conversion of ubisemiquinone to ubiquinol. This is Na(+)-translocating NADH-quinone reductase subunit A from Neisseria meningitidis serogroup C / serotype 2a (strain ATCC 700532 / DSM 15464 / FAM18).